We begin with the raw amino-acid sequence, 339 residues long: Uroporphyrinogen decarboxylase (339 aa).

Substrate-binding positions include 21–25 (RQAGR), Asp-71, Tyr-147, Ser-202, and His-315.

The protein belongs to the uroporphyrinogen decarboxylase family. In terms of assembly, homodimer.

The protein resides in the cytoplasm. The enzyme catalyses uroporphyrinogen III + 4 H(+) = coproporphyrinogen III + 4 CO2. The protein operates within porphyrin-containing compound metabolism; protoporphyrin-IX biosynthesis; coproporphyrinogen-III from 5-aminolevulinate: step 4/4. Functionally, catalyzes the decarboxylation of four acetate groups of uroporphyrinogen-III to yield coproporphyrinogen-III. The sequence is that of Uroporphyrinogen decarboxylase from Helicobacter pylori (strain G27).